We begin with the raw amino-acid sequence, 140 residues long: UPF0225 protein SAV_6631 (140 aa).

The tract at residues Met-1 to Cys-22 is disordered. The span at Thr-10–Pro-19 shows a compositional bias: low complexity.

The protein belongs to the UPF0225 family.

The protein is UPF0225 protein SAV_6631 of Streptomyces avermitilis (strain ATCC 31267 / DSM 46492 / JCM 5070 / NBRC 14893 / NCIMB 12804 / NRRL 8165 / MA-4680).